The chain runs to 251 residues: tRNA-uridine aminocarboxypropyltransferase 2 (251 aa).

Zn(2+) is bound by residues C23, C26, C33, and C35. The DXTW signature appears at 131-134 (DGTW).

Belongs to the TDD superfamily. DTWD2 family.

The enzyme catalyses a uridine in tRNA + S-adenosyl-L-methionine = a 3-[(3S)-3-amino-3-carboxypropyl]uridine in tRNA + S-methyl-5'-thioadenosine + H(+). Its function is as follows. Catalyzes the formation of 3-(3-amino-3-carboxypropyl)uridine (acp3U) at position 20a in the D-loop of several cytoplasmic tRNAs (acp3U(20a)). The chain is tRNA-uridine aminocarboxypropyltransferase 2 from Drosophila melanogaster (Fruit fly).